The chain runs to 327 residues: Protein CONSERVED IN THE GREEN LINEAGE AND DIATOMS 27, chloroplastic (327 aa).

Residues 1–59 constitute a chloroplast transit peptide; it reads MLRLIVNYPLIPKISHRVCSNSSSKLGSYYDSSSIIKYGGISDVVGKKQELFLSVSVKA. A disordered region spans residues 66 to 88; sequence NGGGSMSFSGQSWDPSSEIEVPS. A run of 3 helical transmembrane segments spans residues 119-139, 148-168, and 225-245; these read LGGL…AASF, FILA…LRIY, and LIGT…ATPV.

Mostly expressed in seeds, leaves and flowers, and, to a lower extent, in roots.

Its subcellular location is the membrane. It localises to the plastid. The protein resides in the chloroplast. Its function is as follows. Required for growth in low iron conditions. The protein is Protein CONSERVED IN THE GREEN LINEAGE AND DIATOMS 27, chloroplastic of Arabidopsis thaliana (Mouse-ear cress).